The primary structure comprises 343 residues: Small ribosomal subunit biogenesis GTPase RsgA (343 aa).

Residues 116-275 enclose the CP-type G domain; it reads RGQLKPVAAN…LIDSPGIREF (160 aa). GTP is bound by residues 163 to 166 and 217 to 225; these read NKAD and GQSGVGKSS. The Zn(2+) site is built by cysteine 299, cysteine 304, histidine 306, and cysteine 312.

Belongs to the TRAFAC class YlqF/YawG GTPase family. RsgA subfamily. In terms of assembly, monomer. Associates with 30S ribosomal subunit, binds 16S rRNA. Zn(2+) is required as a cofactor.

The protein localises to the cytoplasm. Its function is as follows. One of several proteins that assist in the late maturation steps of the functional core of the 30S ribosomal subunit. Helps release RbfA from mature subunits. May play a role in the assembly of ribosomal proteins into the subunit. Circularly permuted GTPase that catalyzes slow GTP hydrolysis, GTPase activity is stimulated by the 30S ribosomal subunit. This is Small ribosomal subunit biogenesis GTPase RsgA from Ectopseudomonas mendocina (strain ymp) (Pseudomonas mendocina).